A 612-amino-acid polypeptide reads, in one-letter code: Siderophore iron transporter 1 (612 aa).

5 positions are modified to phosphoserine: Ser-5, Ser-21, Ser-22, Ser-36, and Ser-41. 14 helical membrane-spanning segments follow: residues 91 to 111, 125 to 145, 159 to 179, 188 to 208, 218 to 238, 249 to 269, 299 to 319, 331 to 351, 365 to 385, 406 to 426, 434 to 453, 464 to 484, 495 to 515, and 573 to 593; these read ISFYICYFSIFLLFFAISFQA, FAGHSLLSTIAVANNIISAAI, LEAFLFSLLLYLVGLILMAAS, GSVLYNAGYTGVELIMTIFMA, LVLGISYLPFVVTIWIGPRVA, WGIAVWTILIPACSIPFLAVY, IIGLILMTAGLALVLLSISLA, FIVMIIIGGLCLIAFVLYEIF, EPTIGACCAMSFLFYITFYCW, YISYTYSFTSCATGFFLGILI, WYFVASIPVYILGQGLMIRY, IMPQIIVGIGGGVIANLLTVA, AIVTALVSTVTPIGGAVGSAI, and ILTSVATGFAGAMIFPVWFVA.

It belongs to the major facilitator superfamily.

The protein localises to the membrane. Involved in the transport of siderophore iron and so has a role in iron homeostasis. This chain is Siderophore iron transporter 1 (str1), found in Schizosaccharomyces pombe (strain 972 / ATCC 24843) (Fission yeast).